The primary structure comprises 719 residues: Protein Hook homolog 2 (719 aa).

A required for localization to the centrosome and induction of aggresome formation region spans residues 1–161 (MSVDKAELCG…ELMTKDTPDS (161 aa)). The interval 1–548 (MSVDKAELCG…LKRKLEEHLQ (548 aa)) is sufficient for interaction with microtubules. In terms of domain architecture, Calponin-homology (CH) spans 6–122 (AELCGSLLTW…KLLQLVLGCA (117 aa)). S163 carries the phosphoserine modification. Coiled coils occupy residues 180–427 (LSEE…AQLQ) and 455–607 (AELR…VDKA). Residue T230 is modified to Phosphothreonine. Residues 533 to 719 (DAISILLKRK…SLNLRPTDKH (187 aa)) are required for localization to the centrosome and induction of aggresome formation. A sufficient for interaction with CNTRL region spans residues 584–719 (HNLQKKDADL…SLNLRPTDKH (136 aa)). The segment at 696-719 (LATNSRRGPLGRLASLNLRPTDKH) is disordered. S710 bears the Phosphoserine mark.

The protein belongs to the hook family. Self-associates. Component of the FTS/Hook/FHIP complex (FHF complex), composed of AKTIP/FTS, FHIP1B, and one or more members of the Hook family of proteins HOOK1, HOOK2, and HOOK3. May interact directly with AKTIP/FTS, HOOK1 and HOOK3. Associates with several subunits of the homotypic vesicular sorting complex (the HOPS complex) including VPS16 and VPS41; these interactions may be indirect. Interacts with CNTRL. Interacts with microtubules. Interacts with ZC3H14. Interacts with LRGUK (via guanylate kinase-like domain). Interacts with CCDC181. Interacts with AP4M1; the interaction is direct, mediates the interaction between FTS-Hook-FHIP (FHF) complex and AP-4 and the perinuclear distribution of AP-4.

The protein localises to the cytoplasm. The protein resides in the cytoskeleton. Its subcellular location is the microtubule organizing center. It localises to the centrosome. It is found in the golgi apparatus. The protein localises to the trans-Golgi network. Its function is as follows. Component of the FTS/Hook/FHIP complex (FHF complex). The FHF complex may function to promote vesicle trafficking and/or fusion via the homotypic vesicular protein sorting complex (the HOPS complex). Contributes to the establishment and maintenance of centrosome function. May function in the positioning or formation of aggresomes, which are pericentriolar accumulations of misfolded proteins, proteasomes and chaperones. FHF complex promotes the distribution of AP-4 complex to the perinuclear area of the cell. This chain is Protein Hook homolog 2 (HOOK2), found in Homo sapiens (Human).